The chain runs to 314 residues: Putative S-adenosyl-L-methionine-dependent methyltransferase MRA_3805 (314 aa).

S-adenosyl-L-methionine is bound by residues Asp-132 and 161–162 (DL).

This sequence belongs to the UPF0677 family.

Its function is as follows. Exhibits S-adenosyl-L-methionine-dependent methyltransferase activity. The sequence is that of Putative S-adenosyl-L-methionine-dependent methyltransferase MRA_3805 from Mycobacterium tuberculosis (strain ATCC 25177 / H37Ra).